Reading from the N-terminus, the 173-residue chain is ATP synthase subunit b (173 aa).

The chain crosses the membrane as a helical span at residues 15 to 35 (GVEWGTVIVQVLTFIVLLALL).

The protein belongs to the ATPase B chain family. As to quaternary structure, F-type ATPases have 2 components, F(1) - the catalytic core - and F(0) - the membrane proton channel. F(1) has five subunits: alpha(3), beta(3), gamma(1), delta(1), epsilon(1). F(0) has three main subunits: a(1), b(2) and c(10-14). The alpha and beta chains form an alternating ring which encloses part of the gamma chain. F(1) is attached to F(0) by a central stalk formed by the gamma and epsilon chains, while a peripheral stalk is formed by the delta and b chains.

Its subcellular location is the cell membrane. In terms of biological role, f(1)F(0) ATP synthase produces ATP from ADP in the presence of a proton or sodium gradient. F-type ATPases consist of two structural domains, F(1) containing the extramembraneous catalytic core and F(0) containing the membrane proton channel, linked together by a central stalk and a peripheral stalk. During catalysis, ATP synthesis in the catalytic domain of F(1) is coupled via a rotary mechanism of the central stalk subunits to proton translocation. Component of the F(0) channel, it forms part of the peripheral stalk, linking F(1) to F(0). The polypeptide is ATP synthase subunit b (Staphylococcus aureus (strain MSSA476)).